Here is a 406-residue protein sequence, read N- to C-terminus: Succinylornithine transaminase (406 aa).

N6-(pyridoxal phosphate)lysine is present on K252.

Belongs to the class-III pyridoxal-phosphate-dependent aminotransferase family. AstC subfamily. The cofactor is pyridoxal 5'-phosphate.

The catalysed reaction is N(2)-succinyl-L-ornithine + 2-oxoglutarate = N-succinyl-L-glutamate 5-semialdehyde + L-glutamate. The protein operates within amino-acid degradation; L-arginine degradation via AST pathway; L-glutamate and succinate from L-arginine: step 3/5. Catalyzes the transamination of N(2)-succinylornithine and alpha-ketoglutarate into N(2)-succinylglutamate semialdehyde and glutamate. Can also act as an acetylornithine aminotransferase. The polypeptide is Succinylornithine transaminase (Escherichia coli (strain SMS-3-5 / SECEC)).